Consider the following 241-residue polypeptide: Translation initiation factor IF-3 (241 aa).

Basic and acidic residues predominate over residues 193–203 (AAEKARQKAIQ). A disordered region spans residues 193–241 (AAEKARQKAIQEGRAAPAQDDTEDEEIEKLERELEEQDDEDDDEAEATE). Acidic residues predominate over residues 212 to 241 (DDTEDEEIEKLERELEEQDDEDDDEAEATE).

It belongs to the IF-3 family. Monomer.

The protein localises to the cytoplasm. Its function is as follows. IF-3 binds to the 30S ribosomal subunit and shifts the equilibrium between 70S ribosomes and their 50S and 30S subunits in favor of the free subunits, thus enhancing the availability of 30S subunits on which protein synthesis initiation begins. The sequence is that of Translation initiation factor IF-3 from Sorangium cellulosum (strain So ce56) (Polyangium cellulosum (strain So ce56)).